The chain runs to 28 residues: uncharacterized protein (28 aa).

This is an uncharacterized protein from Spiroplasma virus 4 (SpV4).